The sequence spans 47 residues: Exoenzymes regulatory protein AepH (47 aa).

Basic and acidic residues-rich tracts occupy residues 1–17 and 33–47; these read MGQE…QDGH and TKKE…DANV. Residues 1 to 47 are disordered; sequence MGQEPKGIESRKIQDGHVRKKVGRQQGLWVRTTKKEKFSRMSRDANV.

Functionally, involved in the control of extracellular enzymes production. Stimulates PEL, PEH, CEL, and PRT production. In Pectobacterium carotovorum subsp. carotovorum (Erwinia carotovora subsp. carotovora), this protein is Exoenzymes regulatory protein AepH (aepH).